We begin with the raw amino-acid sequence, 555 residues long: Phosphoglucomutase (555 aa).

Positions 22 and 114 each coordinate alpha-D-glucose 1,6-bisphosphate. Ser-114 (phosphoserine intermediate) is an active-site residue. The Mg(2+) site is built by Ser-114, Asp-279, Asp-281, and Asp-283. Residue Ser-114 is modified to Phosphoserine. The alpha-D-glucose 1,6-bisphosphate site is built by Asp-283, Arg-284, Thr-347, Glu-366, Ser-368, and Lys-379.

The protein belongs to the phosphohexose mutase family. Monomer. Mg(2+) is required as a cofactor.

It localises to the cytoplasm. It catalyses the reaction alpha-D-glucose 1-phosphate = alpha-D-glucose 6-phosphate. The catalysed reaction is O-phospho-L-seryl-[protein] + alpha-D-glucose 1-phosphate = alpha-D-glucose 1,6-bisphosphate + L-seryl-[protein]. It carries out the reaction alpha-D-glucose 1,6-bisphosphate + L-seryl-[protein] = O-phospho-L-seryl-[protein] + alpha-D-glucose 6-phosphate. Its function is as follows. Catalyzes the reversible isomerization of alpha-D-glucose 1-phosphate to alpha-D-glucose 6-phosphate. The mechanism proceeds via the intermediate compound alpha-D-glucose 1,6-bisphosphate. Key enzyme in hexose metabolism. The reverse reaction is an essential step for biosynthesis because glucose 1-phosphate is the starting point for the synthesis of UDP-glucose, which acts as a precursor for the synthesis of oligosaccharides and trehalose. In Aspergillus fumigatus (strain ATCC MYA-4609 / CBS 101355 / FGSC A1100 / Af293) (Neosartorya fumigata), this protein is Phosphoglucomutase (pgmA).